The primary structure comprises 190 residues: Peptidyl-tRNA hydrolase (190 aa).

Position 14 (Phe-14) interacts with tRNA. His-19 acts as the Proton acceptor in catalysis. 3 residues coordinate tRNA: Met-64, Asn-66, and Asn-112.

The protein belongs to the PTH family. Monomer.

It is found in the cytoplasm. The enzyme catalyses an N-acyl-L-alpha-aminoacyl-tRNA + H2O = an N-acyl-L-amino acid + a tRNA + H(+). Its function is as follows. Hydrolyzes ribosome-free peptidyl-tRNAs (with 1 or more amino acids incorporated), which drop off the ribosome during protein synthesis, or as a result of ribosome stalling. Functionally, catalyzes the release of premature peptidyl moieties from peptidyl-tRNA molecules trapped in stalled 50S ribosomal subunits, and thus maintains levels of free tRNAs and 50S ribosomes. This is Peptidyl-tRNA hydrolase from Staphylococcus saprophyticus subsp. saprophyticus (strain ATCC 15305 / DSM 20229 / NCIMB 8711 / NCTC 7292 / S-41).